Consider the following 434-residue polypeptide: Eukaryotic translation initiation factor 3 subunit E (434 aa).

In terms of domain architecture, PCI spans 219–392 (FFNHPKGRDL…GHVVMGTQPL (174 aa)).

This sequence belongs to the eIF-3 subunit E family. In terms of assembly, component of the eukaryotic translation initiation factor 3 (eIF-3) complex. The eIF-3 complex interacts with pix. Interacts with mxt.

The protein resides in the cytoplasm. Component of the eukaryotic translation initiation factor 3 (eIF-3) complex, which is involved in protein synthesis of a specialized repertoire of mRNAs and, together with other initiation factors, stimulates binding of mRNA and methionyl-tRNAi to the 40S ribosome. The eIF-3 complex specifically targets and initiates translation of a subset of mRNAs involved in cell proliferation. The chain is Eukaryotic translation initiation factor 3 subunit E (eIF3-S6) from Drosophila persimilis (Fruit fly).